The chain runs to 61 residues: Outer membrane lipoprotein YnbE (61 aa).

The first 16 residues, 1 to 16 (MKILLAALTSSFMLVG), serve as a signal peptide directing secretion. C17 carries N-palmitoyl cysteine lipidation. Residue C17 is the site of S-diacylglycerol cysteine attachment.

The protein belongs to the lipoprotein YnbE family. As to quaternary structure, interacts with the C-terminal region of the probable phospholipid transport protein YdbH.

The protein resides in the cell outer membrane. In terms of biological role, involved in outer membrane lipid homeostasis. Interacts with the inner membrane protein YdbH to form a functional protein bridge connecting the inner and outer membranes of the cell. Is required for YdbH's function and may facilitate phospholipid transport through the periplasm. In Escherichia coli O6:H1 (strain CFT073 / ATCC 700928 / UPEC), this protein is Outer membrane lipoprotein YnbE (ynbE).